The chain runs to 39 residues: Larval cuticle protein SC6 (39 aa).

Residues 15–39 form the Chitin-binding type R&amp;R domain; sequence VDQFKYGLELDNSIKADQEGHLEGD.

Its function is as follows. Component of the cuticle of the larva of flesh fly. This Sarcophaga bullata (Grey flesh fly) protein is Larval cuticle protein SC6.